Consider the following 361-residue polypeptide: Small ribosomal subunit protein mS46 (361 aa).

The N-terminal 14 residues, 1-14, are a transit peptide targeting the mitochondrion; sequence MRSSMFRCVSRAHY. The interval 37-99 is disordered; the sequence is ASSNALKLDK…SDSVRANKQQ (63 aa). The segment covering 43–52 has biased composition (basic and acidic residues); the sequence is KLDKMKEGRM. Residues 59-68 are compositionally biased toward low complexity; the sequence is GNQNRNSMNN. The span at 69–91 shows a compositional bias: basic and acidic residues; the sequence is KESRGREGNQGERNMRLKNRSSD.

This sequence belongs to the mitochondrion-specific ribosomal protein mS46 family. In terms of assembly, component of the mitochondrial small ribosomal subunit (mt-SSU). Mature yeast 74S mitochondrial ribosomes consist of a small (37S) and a large (54S) subunit. The 37S small subunit contains a 15S ribosomal RNA (15S mt-rRNA) and 34 different proteins. The 54S large subunit contains a 21S rRNA (21S mt-rRNA) and 46 different proteins.

It localises to the mitochondrion. Component of the mitochondrial ribosome (mitoribosome), a dedicated translation machinery responsible for the synthesis of mitochondrial genome-encoded proteins, including at least some of the essential transmembrane subunits of the mitochondrial respiratory chain. The mitoribosomes are attached to the mitochondrial inner membrane and translation products are cotranslationally integrated into the membrane. In Saccharomyces cerevisiae (strain ATCC 204508 / S288c) (Baker's yeast), this protein is Small ribosomal subunit protein mS46 (RSM28).